We begin with the raw amino-acid sequence, 174 residues long: ATP synthase subunit b (174 aa).

The helical transmembrane segment at 18–38 (IIVVSGSFLILMFLLKHFAWG) threads the bilayer.

The protein belongs to the ATPase B chain family. As to quaternary structure, F-type ATPases have 2 components, F(1) - the catalytic core - and F(0) - the membrane proton channel. F(1) has five subunits: alpha(3), beta(3), gamma(1), delta(1), epsilon(1). F(0) has three main subunits: a(1), b(2) and c(10-14). The alpha and beta chains form an alternating ring which encloses part of the gamma chain. F(1) is attached to F(0) by a central stalk formed by the gamma and epsilon chains, while a peripheral stalk is formed by the delta and b chains.

The protein resides in the cell membrane. In terms of biological role, f(1)F(0) ATP synthase produces ATP from ADP in the presence of a proton or sodium gradient. F-type ATPases consist of two structural domains, F(1) containing the extramembraneous catalytic core and F(0) containing the membrane proton channel, linked together by a central stalk and a peripheral stalk. During catalysis, ATP synthesis in the catalytic domain of F(1) is coupled via a rotary mechanism of the central stalk subunits to proton translocation. Its function is as follows. Component of the F(0) channel, it forms part of the peripheral stalk, linking F(1) to F(0). The polypeptide is ATP synthase subunit b (Enterococcus hirae (strain ATCC 9790 / DSM 20160 / JCM 8729 / LMG 6399 / NBRC 3181 / NCIMB 6459 / NCDO 1258 / NCTC 12367 / WDCM 00089 / R)).